A 1785-amino-acid polypeptide reads, in one-letter code: MATPDDPATPALSLSASNSSSPTAASSVPPPTGTSEIQYDDVAIIGMSCRTAGGNDSPEKLWRFIMDKKDASGESPSWRWEPWVRRDTRNAKVIEKTISKGYFIEDLENFDASFFGISPKEAEQMDPHQRLGLEVTWEALEDAGINPQSLSGSDTAVYVGVDSDDYSRLLLEDIPNIEAWMGIGTTAHGIPNRISYHLDLMGPSAAVDAACASSMVAVHTGRQAILAGESRIAIVGGVNVCLSPALFHMLGAAGALSPDGVCLSFDEEARGYARGEGAAILILKKMSHAIMDGDHILATIKGSAIAQDGKTNGIMAPNAKAQELVARKALKQAGINALTVGYIEAHATSTPLGDPTEVSAISAVYGVGRPTDTPALIGSIKPNVGHLEAAAGAISLVKAVMAVQKGIVPPQTRLNKLNTRVDWAKSGLHVVRESTQWGTEDSPRRAAICSYGYGGTVSHAIIEQFAHAADPFTASTSDDNHPTLLLLSAPQGKQRLPAQSAALAEWISPAGAHESLRSIAATLATRRAHHENRAAFIVSSHTEAAETLNLFSKGAEHDSIVQSRTLDNNINKQIVWVFSGHGSHWSGMGKQLLQNAVFYRTVAPLDIVVVQELGYSAIEALKTGRFESSGQVQVLTYMTQIGLIQLLKAKGVHPHAVIGHSVGEIAASVAAGCLTPEEGMIIVTRRARLFAKVIGCGGMFLVSLPFAEVLAELGGRTDIVAAIDSSPSSCVISGLNAPLEEYVEKLKNRGIRVFQVKTDIAFHSPMLEVLSKPLKESLEGSLNPQPPNIKLYSTSQADTRHPARRDAEYWVDNMVKPVWLRPAVTAAIEDHYRIFMEVSTHPIVSHSLDETLAENGASDFTTIHTMKKEQSAEKCILHAVAQLWTKGVKIDFKFLGRQWSREVPKIRWSHKRFWKEVSTGSASAQTVHDPDKNNMLGQRMVVAGTNMTIFTTALDESSKPFPMPHQLHGTDIIPVSVYVNTFIKATGGKVLSKMELRVPLAVTNDVRNVQVIVDGQSVKVASRLSSSDDMSWVTHSTASWENEPSANVLPSLDVSSVIKRIGTRVSETFSVDYLKKTGVSGMAFPWAVNDHYNNTKEMLVTLDNDPEHETMSWDPCSWGATLDAATSVGATLFSREVKLRIVSHIDRLTIYSSDPPPKRYHLYVTEASSSQVHACSADISVLDLSGTLLARIESIRFTEVEATPTKSTSIESGVHQIAWVPARLSEKPLSLEQIVLVSEDDAKLEQYANELQRQAPKIVKLTSAAKLRDNGALFMREKNATVIYCPGTVTSLEDVASASHRFIWEVATAIKFLVENSISAKFFVILDRTFLAGSPTALAQGALYGLARVVASEHSDIWGGLIDNEGPLFPVMPLKYVQDQDITRYIDGVPRVARMRPFTKQQRYAPSTARTLLPKPEGTYVLTGGLGALGLETCDFLIEKGARRIVVISRRDIPARSQWSKASENLAPILERVKAMEKTGASIYFVSLDIGAADAHQQLLFALERLSLPPVLGVIHASGVLEDSLLVDTTSDSFARVLSPKISGALALHKAFPPGTLDFFVLYSSIGQLVGTSGQSSYAAGNSFLDVLAAHRRSQGDNAIAFQWTAWRGLGMATSTDFLTLELQSKGITDVGRDEAFQAWEHMSKYDVDQAVVTRTLALEADDILPCALLEEVVVRKARAQDQSAPASGNASDSSGRPTASADLKPWLDVKIRECVALVMGVEDIEEIDTRVPLSDYGVDSIMTIALRQKLQSKLKIKVPQTLMWNYPTVSAMVGWFQKQFEEGQ.

Residues 1-36 are disordered; the sequence is MATPDDPATPALSLSASNSSSPTAASSVPPPTGTSE. The segment covering 8 to 27 has biased composition (low complexity); the sequence is ATPALSLSASNSSSPTAASS. One can recognise a Ketosynthase family 3 (KS3) domain in the interval 39–464; it reads YDDVAIIGMS…GTVSHAIIEQ (426 aa). Residues cysteine 211, histidine 346, and histidine 386 each act as for beta-ketoacyl synthase activity in the active site. Residues 575 to 888 are malonyl-CoA:ACP transacylase (MAT) domain; the sequence is VWVFSGHGSH…AVAQLWTKGV (314 aa). Residue serine 661 is the For malonyltransferase activity of the active site. The N-terminal hotdog fold stretch occupies residues 933–1047; sequence NNMLGQRMVV…ASWENEPSAN (115 aa). The PKS/mFAS DH domain maps to 933 to 1206; sequence NNMLGQRMVV…FTEVEATPTK (274 aa). A dehydratase (DH) domain region spans residues 935–1203; that stretch reads MLGQRMVVAG…SIRFTEVEAT (269 aa). Residue histidine 965 is the Proton acceptor; for dehydratase activity of the active site. The C-terminal hotdog fold stretch occupies residues 1062–1206; that stretch reads GTRVSETFSV…FTEVEATPTK (145 aa). Aspartate 1123 (proton donor; for dehydratase activity) is an active-site residue. Residues 1418 to 1608 are ketoreductase (KR) domain; that stretch reads GTYVLTGGLG…AIAFQWTAWR (191 aa). Positions 1681–1698 are enriched in polar residues; the sequence is QDQSAPASGNASDSSGRP. The interval 1681 to 1701 is disordered; sequence QDQSAPASGNASDSSGRPTAS. The Carrier domain maps to 1706 to 1781; sequence PWLDVKIREC…AMVGWFQKQF (76 aa). Serine 1741 is subject to O-(pantetheine 4'-phosphoryl)serine.

The protein operates within secondary metabolite biosynthesis. In terms of biological role, polyketide synthase that produces (R)-mellein, a secondary metabolite that inhibits the germination of wheat (Triticum aestivum) and barrel medic (Medicago truncatula) seeds. Condensates 1 acetate starter unit and 4 extender malonate units. The nascent pentaketide intermediate then undergoes an aldol cyclization and is aromatized via dehydration. The (R)-O-methylmellein isolated from P.nodorum is most likely to be derived from (R)-mellein via an additional methylation at the hydroxyl group. Interestingly, no O-methyltransferase gene is encoded in the vicinity of MLNS on the chromosome. Thus, the O-methylation is likely to be catalyzed by an endogenous O-methyltransferase encoded elsewhere in the genome of P.nodorum. This Phaeosphaeria nodorum (strain SN15 / ATCC MYA-4574 / FGSC 10173) (Glume blotch fungus) protein is Mellein synthase.